We begin with the raw amino-acid sequence, 897 residues long: N-terminal acetyltransferase A complex auxiliary subunit NAA15 (897 aa).

TPR repeat units follow at residues 77–110 (HVCW…DPDN), 111–144 (LEIL…KPNH), 189–222 (TEMI…IVDK), 223–256 (LSYK…NPDN), 298–331 (SSAV…KGVP), 380–413 (LWTL…TPTV), and 488–523 (QCMW…YADI). Disordered regions lie at residues 578 to 640 (KSTA…DPHG) and 863 to 897 (SRKS…SVAT). Basic and acidic residues predominate over residues 602–617 (KAEARAKKEAESKSEE). Over residues 863–872 (SRKSNENGDT) the composition is skewed to polar residues.

As to quaternary structure, part of the NatA complex. Associates with ribosomes. Interacts with NAA10. In terms of tissue distribution, expressed in leaves, roots, shoots and flowers.

In terms of biological role, auxiliary subunit of the NatA N-alpha-acetyltransferase complex. Required for male gametocyte development, embryogenesis, suspensor development and the formation of the quiescent center (QC) in the root meristem. Involved in plant immunity through the regulation of SNC1 stability. Required for embryo development. This is N-terminal acetyltransferase A complex auxiliary subunit NAA15 from Arabidopsis thaliana (Mouse-ear cress).